Reading from the N-terminus, the 366-residue chain is DNA primase large subunit PriL (366 aa).

Residues Cys-227, Cys-298, Cys-307, and Cys-314 each coordinate [4Fe-4S] cluster.

It belongs to the eukaryotic-type primase large subunit family. Heterodimer of a small subunit (PriS) and a large subunit (PriL). [4Fe-4S] cluster serves as cofactor.

Regulatory subunit of DNA primase, an RNA polymerase that catalyzes the synthesis of short RNA molecules used as primers for DNA polymerase during DNA replication. Stabilizes and modulates the activity of the small subunit, increasing the rate of DNA synthesis, and conferring RNA synthesis capability. The DNA polymerase activity may enable DNA primase to also catalyze primer extension after primer synthesis. May also play a role in DNA repair. The protein is DNA primase large subunit PriL of Methanocella arvoryzae (strain DSM 22066 / NBRC 105507 / MRE50).